The chain runs to 599 residues: Histone-arginine methyltransferase CARMER (599 aa).

The region spanning 127 to 434 (ASQYFQFYGY…QRQSYDVEID (308 aa)) is the SAM-dependent MTase PRMT-type domain. Gln140, Arg149, Gly173, Glu195, Glu224, and Thr252 together coordinate S-adenosyl-L-methionine. Arg487 carries the post-translational modification Asymmetric dimethylarginine; by autocatalysis.

It belongs to the class I-like SAM-binding methyltransferase superfamily. Protein arginine N-methyltransferase family. Homodimer. Post-translationally, the dimethylated protein is the major form.

The protein localises to the cytoplasm. Its subcellular location is the nucleus. It catalyses the reaction L-arginyl-[protein] + 2 S-adenosyl-L-methionine = N(omega),N(omega)-dimethyl-L-arginyl-[protein] + 2 S-adenosyl-L-homocysteine + 2 H(+). Functionally, methylates (mono- and asymmetric dimethylation) the guanidino nitrogens of arginyl residues in proteins. May methylate histone H3 at 'Arg-17' and activate transcription via chromatin remodeling. The sequence is that of Histone-arginine methyltransferase CARMER (Art4) from Culex quinquefasciatus (Southern house mosquito).